Reading from the N-terminus, the 599-residue chain is MKLILIYLILVFNLFNFINCQNILKVSNVRFAQTHVIPIEGKSWNIQGSTKHMSIVGKRRALLLASFQDQNLSYFATIWYDGGKVGMIQLNDPSQLPLTEDNGEKYSKVHHSGMIPKEWVRVGMKIQFSSFGGINGTEVSDILSPDVGQDYTLKMWILPFYLFGANDTNTQPFSKTKGIDSGISKELIEKWSCSDLQADNHPIQKIDWPYFVMEPRSGNPAMVITNSDQKKDGYAIMNGVLSILWLLRGMFGESSSSIQIYSPLLHLDAKGRYADTYGGLGGSSAGTGNHRFTGIFIHEQGHAMGLPHAGEAYDNKRKYPYKQGSLSGSEWGFDANHNEFLGTFIPPTAELYKTCKKNSIIDSKGRCVKQSVMQSGAGDQSSKYRYSMFADFEMTTIQNYFKNSIYYDETNGKYKKWNDTSKSYYAYKPITKEKGFEGVDENTPIERNVDIYSIIFTYSTVEKPKVGKISQIYPLLKSKGNLIRQFDPTNKKEMDSVNPKLNGEFKWYCNSSGCDYTIRVTFYDSSLKHVLLQQGKRKYKLPTGSFRDNINDPKSSDSFMLGGVNIKANKKIKKVELLETPFAWNGIPKNPTVLVSKSF.

The first 20 residues, 1–20 (MKLILIYLILVFNLFNFINC), serve as a signal peptide directing secretion. The region spanning 145 to 407 (PDVGQDYTLK…QNYFKNSIYY (263 aa)) is the Peptidase M66 domain. A Zn(2+)-binding site is contributed by His-298. Glu-299 is a catalytic residue. 2 residues coordinate Zn(2+): His-302 and His-308.

It belongs to the dictomallein family. Zn(2+) is required as a cofactor.

The protein localises to the secreted. The protein is Dictomallein-2 (dtmlB) of Dictyostelium discoideum (Social amoeba).